The primary structure comprises 866 residues: Probable LRR receptor-like serine/threonine-protein kinase At5g16900 (866 aa).

Positions 1–20 are cleaved as a signal peptide; sequence MEDRHRYLFFIFAIIHYVQA. Residues 21-515 lie on the Extracellular side of the membrane; sequence QQGFISLDCG…SSSGNKETTV (495 aa). 8 N-linked (GlcNAc...) asparagine glycosylation sites follow: N137, N176, N230, N251, N331, N404, N409, and N436. LRR repeat units follow at residues 415 to 438, 439 to 461, and 463 to 485; these read RIIS…QNLT, QLQK…LANM, and SLLF…LLDR. N-linked (GlcNAc...) asparagine glycans are attached at residues N468 and N505. Residues 516 to 536 traverse the membrane as a helical segment; the sequence is IAPVAAAIAIFIAVLVLIIVF. At 537–866 the chain is on the cytoplasmic side; sequence IKKRPSSIRA…LNQVIDSKSS (330 aa). Residue T564 is modified to Phosphothreonine. The Protein kinase domain maps to 573–846; that stretch reads NNFERVIGEG…HVVQELKQCI (274 aa). ATP contacts are provided by residues 579–587 and K601; that span reads IGEGGFGVV. Y646 is subject to Phosphotyrosine. Residue D698 is the Proton acceptor of the active site. Residue S732 is modified to Phosphoserine. Phosphothreonine occurs at positions 733 and 738. Y746 is subject to Phosphotyrosine.

This sequence belongs to the protein kinase superfamily. Ser/Thr protein kinase family.

The protein resides in the membrane. The enzyme catalyses L-seryl-[protein] + ATP = O-phospho-L-seryl-[protein] + ADP + H(+). It carries out the reaction L-threonyl-[protein] + ATP = O-phospho-L-threonyl-[protein] + ADP + H(+). The protein is Probable LRR receptor-like serine/threonine-protein kinase At5g16900 of Arabidopsis thaliana (Mouse-ear cress).